The chain runs to 510 residues: Bifunctional pantoate ligase/cytidylate kinase (510 aa).

The pantoate--beta-alanine ligase stretch occupies residues 1–276 (MKKVIIRKTE…CGETRLIDHV (276 aa)). ATP is bound at residue 29-36 (MGNLHNGH). His-36 functions as the Proton donor in the catalytic mechanism. Gln-61 provides a ligand contact to (R)-pantoate. Residue Gln-61 participates in beta-alanine binding. Position 150-153 (150-153 (GEKD)) interacts with ATP. Gln-156 serves as a coordination point for (R)-pantoate. 187 to 190 (LSSR) is an ATP binding site. The interval 277–510 (FLMKRSPIIA…DKIPKETQIR (234 aa)) is cytidylate kinase.

This sequence in the N-terminal section; belongs to the pantothenate synthetase family. In the C-terminal section; belongs to the cytidylate kinase family. Type 1 subfamily.

It is found in the cytoplasm. It catalyses the reaction (R)-pantoate + beta-alanine + ATP = (R)-pantothenate + AMP + diphosphate + H(+). The catalysed reaction is CMP + ATP = CDP + ADP. It carries out the reaction dCMP + ATP = dCDP + ADP. It participates in cofactor biosynthesis; (R)-pantothenate biosynthesis; (R)-pantothenate from (R)-pantoate and beta-alanine: step 1/1. Catalyzes the condensation of pantoate with beta-alanine in an ATP-dependent reaction via a pantoyl-adenylate intermediate. Its function is as follows. Catalyzes the transfer of a phosphate group from ATP to either CMP or dCMP to form CDP or dCDP and ADP, respectively. The polypeptide is Bifunctional pantoate ligase/cytidylate kinase (Prochlorococcus marinus (strain MIT 9312)).